Reading from the N-terminus, the 143-residue chain is ATP synthase subunit b' (143 aa).

The helical transmembrane segment at 6 to 26 (ATLPLMALQFVVLAFLLNAIF) threads the bilayer.

It belongs to the ATPase B chain family. F-type ATPases have 2 components, F(1) - the catalytic core - and F(0) - the membrane proton channel. F(1) has five subunits: alpha(3), beta(3), gamma(1), delta(1), epsilon(1). F(0) has four main subunits: a(1), b(1), b'(1) and c(10-14). The alpha and beta chains form an alternating ring which encloses part of the gamma chain. F(1) is attached to F(0) by a central stalk formed by the gamma and epsilon chains, while a peripheral stalk is formed by the delta, b and b' chains.

It is found in the cellular thylakoid membrane. Functionally, f(1)F(0) ATP synthase produces ATP from ADP in the presence of a proton or sodium gradient. F-type ATPases consist of two structural domains, F(1) containing the extramembraneous catalytic core and F(0) containing the membrane proton channel, linked together by a central stalk and a peripheral stalk. During catalysis, ATP synthesis in the catalytic domain of F(1) is coupled via a rotary mechanism of the central stalk subunits to proton translocation. Component of the F(0) channel, it forms part of the peripheral stalk, linking F(1) to F(0). The b'-subunit is a diverged and duplicated form of b found in plants and photosynthetic bacteria. The chain is ATP synthase subunit b' from Synechocystis sp. (strain ATCC 27184 / PCC 6803 / Kazusa).